Here is a 529-residue protein sequence, read N- to C-terminus: Bifunctional purine biosynthesis protein PurH (529 aa).

One can recognise an MGS-like domain in the interval 1-148 (MQQHRPVRRA…KNHKDVAIVV (148 aa)).

The protein belongs to the PurH family.

The catalysed reaction is (6R)-10-formyltetrahydrofolate + 5-amino-1-(5-phospho-beta-D-ribosyl)imidazole-4-carboxamide = 5-formamido-1-(5-phospho-D-ribosyl)imidazole-4-carboxamide + (6S)-5,6,7,8-tetrahydrofolate. It carries out the reaction IMP + H2O = 5-formamido-1-(5-phospho-D-ribosyl)imidazole-4-carboxamide. It participates in purine metabolism; IMP biosynthesis via de novo pathway; 5-formamido-1-(5-phospho-D-ribosyl)imidazole-4-carboxamide from 5-amino-1-(5-phospho-D-ribosyl)imidazole-4-carboxamide (10-formyl THF route): step 1/1. The protein operates within purine metabolism; IMP biosynthesis via de novo pathway; IMP from 5-formamido-1-(5-phospho-D-ribosyl)imidazole-4-carboxamide: step 1/1. This Erwinia tasmaniensis (strain DSM 17950 / CFBP 7177 / CIP 109463 / NCPPB 4357 / Et1/99) protein is Bifunctional purine biosynthesis protein PurH.